Here is a 476-residue protein sequence, read N- to C-terminus: tRNA sulfurtransferase (476 aa).

Positions 54–156 (AENDIPLSKV…GKDALIYDKI (103 aa)) constitute a THUMP domain. ATP is bound by residues 174-175 (MV), K256, G278, and Q287. C334 and C433 form a disulfide bridge. One can recognise a Rhodanese domain in the interval 388 to 470 (NLEDAVFIDL…LSKQKGSVDE (83 aa)). C433 functions as the Cysteine persulfide intermediate in the catalytic mechanism.

It belongs to the ThiI family.

Its subcellular location is the cytoplasm. It catalyses the reaction [ThiI sulfur-carrier protein]-S-sulfanyl-L-cysteine + a uridine in tRNA + 2 reduced [2Fe-2S]-[ferredoxin] + ATP + H(+) = [ThiI sulfur-carrier protein]-L-cysteine + a 4-thiouridine in tRNA + 2 oxidized [2Fe-2S]-[ferredoxin] + AMP + diphosphate. The catalysed reaction is [ThiS sulfur-carrier protein]-C-terminal Gly-Gly-AMP + S-sulfanyl-L-cysteinyl-[cysteine desulfurase] + AH2 = [ThiS sulfur-carrier protein]-C-terminal-Gly-aminoethanethioate + L-cysteinyl-[cysteine desulfurase] + A + AMP + 2 H(+). It functions in the pathway cofactor biosynthesis; thiamine diphosphate biosynthesis. Its function is as follows. Catalyzes the ATP-dependent transfer of a sulfur to tRNA to produce 4-thiouridine in position 8 of tRNAs, which functions as a near-UV photosensor. Also catalyzes the transfer of sulfur to the sulfur carrier protein ThiS, forming ThiS-thiocarboxylate. This is a step in the synthesis of thiazole, in the thiamine biosynthesis pathway. The sulfur is donated as persulfide by IscS. The polypeptide is tRNA sulfurtransferase (Thermoplasma volcanium (strain ATCC 51530 / DSM 4299 / JCM 9571 / NBRC 15438 / GSS1)).